The following is a 307-amino-acid chain: Malate dehydrogenase (307 aa).

NAD(+) contacts are provided by residues 8–13 (GAGNVG) and aspartate 32. 2 residues coordinate substrate: arginine 81 and arginine 87. NAD(+) is bound by residues asparagine 94 and 117-119 (VSN). 2 residues coordinate substrate: asparagine 119 and arginine 150. Histidine 174 (proton acceptor) is an active-site residue.

Belongs to the LDH/MDH superfamily. MDH type 3 family.

It catalyses the reaction (S)-malate + NAD(+) = oxaloacetate + NADH + H(+). Catalyzes the reversible oxidation of malate to oxaloacetate. The polypeptide is Malate dehydrogenase (Dehalococcoides mccartyi (strain ATCC BAA-2100 / JCM 16839 / KCTC 5957 / BAV1)).